Consider the following 316-residue polypeptide: Ribosomal protein L11 methyltransferase (316 aa).

S-adenosyl-L-methionine-binding residues include Thr157, Gly178, Asp200, and Asn243.

Belongs to the methyltransferase superfamily. PrmA family.

It is found in the cytoplasm. The catalysed reaction is L-lysyl-[protein] + 3 S-adenosyl-L-methionine = N(6),N(6),N(6)-trimethyl-L-lysyl-[protein] + 3 S-adenosyl-L-homocysteine + 3 H(+). In terms of biological role, methylates ribosomal protein L11. This Streptococcus pneumoniae serotype 2 (strain D39 / NCTC 7466) protein is Ribosomal protein L11 methyltransferase.